The sequence spans 307 residues: MKVIPLASESLGVRSLALFLKIGKVGILIDPGVALGPKRYALPPAQAEMKALSLAREKIQEYAKKAQIVTISHYHYDHHTPFFEGIYESSSVEKAREIYAGKLLLIKHPTENINNSQKKRAHEFLKNAKEIAKDIKFADSQSFDFGSFTIEFSPPVPHGREGSKLGYVLMVLVDDGKKSVLHASDTQLINDKAVEWIIEKNPDILIAGGPPTYLAHRVGNVKEIGMKNINRIISETNAKIVLDHHIIRDKGYERFFSELDERPLTFAEFLGKESAPLEAYRRELHKLEKGEEVEVPGGIKKFLKGLK.

This sequence belongs to the UPF0282 family.

This Pyrococcus horikoshii (strain ATCC 700860 / DSM 12428 / JCM 9974 / NBRC 100139 / OT-3) protein is UPF0282 protein PH1002.